The sequence spans 233 residues: tRNA (guanine-N(7)-)-methyltransferase (233 aa).

Residues 1 to 21 (MTEESHPLRGAGNFFGRRHGK) are disordered. 4 residues coordinate S-adenosyl-L-methionine: Glu64, Glu89, Asp116, and Asp138. Asp138 is an active-site residue. Residues Lys142, Asp174, and 212-215 (TRYE) each bind substrate.

The protein belongs to the class I-like SAM-binding methyltransferase superfamily. TrmB family.

It carries out the reaction guanosine(46) in tRNA + S-adenosyl-L-methionine = N(7)-methylguanosine(46) in tRNA + S-adenosyl-L-homocysteine. It participates in tRNA modification; N(7)-methylguanine-tRNA biosynthesis. Catalyzes the formation of N(7)-methylguanine at position 46 (m7G46) in tRNA. This chain is tRNA (guanine-N(7)-)-methyltransferase, found in Brucella anthropi (strain ATCC 49188 / DSM 6882 / CCUG 24695 / JCM 21032 / LMG 3331 / NBRC 15819 / NCTC 12168 / Alc 37) (Ochrobactrum anthropi).